The sequence spans 494 residues: Ell-associated factor Eaf (494 aa).

A compositionally biased stretch (polar residues) spans 119-138 (KTRSEVTNKPSLMSATNAPM). 2 disordered regions span residues 119 to 212 (KTRS…PAWH) and 243 to 494 (QANI…DDDD). Low complexity predominate over residues 139-156 (SNGAPVPSSAAAGTGSAG). Over residues 159–178 (ENSTMRISSKTKVSTGSRRN) the composition is skewed to polar residues. S188 carries the phosphoserine modification. Composition is skewed to polar residues over residues 243–256 (QANI…SSAG) and 280–306 (QQLT…NNYA). A compositionally biased stretch (low complexity) spans 307–319 (QQQQQQQQQQLQQ). The span at 320–332 (RASFSHSNHSNSM) shows a compositional bias: polar residues. Over residues 344–373 (QTAQSMAQAAAALEQQIGGELSASSSSSES) the composition is skewed to low complexity. The span at 374-389 (DSSDSDSGSDSDDSTE) shows a compositional bias: acidic residues. Residues 414–424 (HQQQQHMHQLP) show a composition bias toward low complexity. Residues 437 to 454 (SHHHHQQQQQSHHHHHHQ) are compositionally biased toward basic residues. Low complexity-rich tracts occupy residues 455–464 (QQQQQQHQQS) and 475–488 (NDLL…SSNS).

The protein belongs to the EAF family.

The protein resides in the nucleus. In terms of biological role, promotes transcriptional elongation by Su(Tpl)/ELL. Essential for development. This is Ell-associated factor Eaf from Drosophila virilis (Fruit fly).